We begin with the raw amino-acid sequence, 149 residues long: 3-dehydroquinate dehydratase (149 aa).

Catalysis depends on tyrosine 22, which acts as the Proton acceptor. Substrate-binding residues include asparagine 74, histidine 80, and aspartate 87. Histidine 100 (proton donor) is an active-site residue. Substrate is bound by residues 101–102 (LS) and arginine 111.

Belongs to the type-II 3-dehydroquinase family. As to quaternary structure, homododecamer.

The enzyme catalyses 3-dehydroquinate = 3-dehydroshikimate + H2O. The protein operates within metabolic intermediate biosynthesis; chorismate biosynthesis; chorismate from D-erythrose 4-phosphate and phosphoenolpyruvate: step 3/7. Its function is as follows. Catalyzes a trans-dehydration via an enolate intermediate. This Vesicomyosocius okutanii subsp. Calyptogena okutanii (strain HA) protein is 3-dehydroquinate dehydratase.